Here is a 710-residue protein sequence, read N- to C-terminus: Nucleolin (710 aa).

The segment at 1–303 is disordered; sequence MVKLAKAGKN…KKQKVEGTEP (303 aa). N6-acetyllysine is present on residues Lys-9, Lys-15, and Lys-16. Positions 24–43 are enriched in acidic residues; it reads VEEDSEDEEMSEDEEDDSSG. Phosphoserine occurs at positions 28, 34, 41, and 42. The span at 56-107 shows a compositional bias: low complexity; that stretch reads AAATSAKKVVVSPTKKVAVATPAKKAAVTPGKKAAATPAKKTVTPAKAVTTP. Repeat 1 spans residues 58–65; the sequence is ATSAKKVV. The interval 58-135 is 8 X 8 AA tandem repeats of X-T-P-X-K-K-X-X; that stretch reads ATSAKKVVVS…GAAIPAKGAK (78 aa). Ser-67 carries the post-translational modification Phosphoserine. Phosphothreonine occurs at positions 69, 76, 84, and 92. 3 tandem repeats follow at residues 75 to 82, 83 to 90, and 91 to 98. Position 96 is an N6-acetyllysine (Lys-96). Residue Thr-99 is modified to Phosphothreonine. The 5; truncated repeat unit spans residues 99 to 104; that stretch reads TPAKAV. Position 102 is an N6-acetyllysine (Lys-102). Repeat unit 6 spans residues 105–112; it reads TTPGKKGA. Thr-106 bears the Phosphothreonine mark. The residue at position 109 (Lys-109) is an N6-acetyllysine. Position 113 is a phosphothreonine (Thr-113). Lys-116 is subject to N6-acetyllysine. 2 consecutive repeat copies span residues 120–127 and 128–135. Thr-121 is subject to Phosphothreonine. Residues 122-137 show a composition bias toward low complexity; the sequence is PGKKGAAIPAKGAKNG. Lys-124 is modified (N6-acetyllysine). Phosphoserine occurs at positions 145 and 153. Over residues 145 to 171 the composition is skewed to acidic residues; that stretch reads SDEEEDDDSEEDEEDDEDEDEDEDEIE. Over residues 172 to 183 the composition is skewed to low complexity; sequence PAAMKAAAAAPA. 2 positions are modified to phosphoserine: Ser-184 and Ser-206. Residues 184–211 are compositionally biased toward acidic residues; that stretch reads SEDEDDEDDEDDEDDDDDEEDDSEEEAM. Phosphothreonine is present on Thr-214. Over residues 234–272 the composition is skewed to acidic residues; that stretch reads EDEDEEEDDEDEDDDDDEDDEDDDDEDDEEEEEEEEEEP. Residues 273 to 300 show a composition bias toward basic and acidic residues; it reads VKEAPGKRKKEMAKQKAAPEAKKQKVEG. Lys-297 participates in a covalent cross-link: Glycyl lysine isopeptide (Lys-Gly) (interchain with G-Cter in SUMO1); alternate. A Glycyl lysine isopeptide (Lys-Gly) (interchain with G-Cter in SUMO2); alternate cross-link involves residue Lys-297. Thr-301 carries the phosphothreonine modification. RRM domains are found at residues 307–383 and 393–466; these read FNLF…KPKG and RTLL…YTGE. At Lys-318 the chain carries N6-acetyllysine. A Glycyl lysine isopeptide (Lys-Gly) (interchain with G-Cter in SUMO1); alternate cross-link involves residue Lys-324. Lys-324 participates in a covalent cross-link: Glycyl lysine isopeptide (Lys-Gly) (interchain with G-Cter in SUMO2); alternate. Position 348 is an N6-acetyllysine (Lys-348). A Phosphoserine modification is found at Ser-356. Thr-367 is subject to Phosphothreonine. A Glycyl lysine isopeptide (Lys-Gly) (interchain with G-Cter in SUMO2) cross-link involves residue Lys-370. Residue Lys-377 forms a Glycyl lysine isopeptide (Lys-Gly) (interchain with G-Cter in SUMO2); alternate linkage. N6-acetyllysine; alternate is present on Lys-377. Residues Lys-398 and Lys-403 each carry the N6-acetyllysine modification. A Phosphothreonine modification is found at Thr-405. Lys-427 and Lys-444 each carry N6-acetyllysine. 2 positions are modified to phosphoserine: Ser-458 and Ser-460. N6-acetyllysine occurs at positions 467 and 477. An RRM 3 domain is found at 486-560; that stretch reads KTLVLSNLSY…RAIRLELQGP (75 aa). Lys-513 is covalently cross-linked (Glycyl lysine isopeptide (Lys-Gly) (interchain with G-Cter in SUMO2); alternate). N6-acetyllysine; alternate is present on Lys-513. Lys-521 bears the N6-acetyllysine mark. Phosphoserine is present on Ser-563. Lys-572 bears the N6-acetyllysine mark. Positions 572-647 constitute an RRM 4 domain; it reads KTLFVKGLSE…NKVTLDWAKP (76 aa). Lys-577 participates in a covalent cross-link: Glycyl lysine isopeptide (Lys-Gly) (interchain with G-Cter in SUMO2); alternate. N6-acetyllysine; alternate is present on Lys-577. Phosphoserine is present on Ser-580. Residue Lys-589 forms a Glycyl lysine isopeptide (Lys-Gly) (interchain with G-Cter in SUMO1); alternate linkage. Lys-589 participates in a covalent cross-link: Glycyl lysine isopeptide (Lys-Gly) (interchain with G-Cter in SUMO2); alternate. 2 positions are modified to phosphoserine: Ser-591 and Ser-619. A Glycyl lysine isopeptide (Lys-Gly) (interchain with G-Cter in SUMO2) cross-link involves residue Lys-624. Positions 640–710 are disordered; the sequence is VTLDWAKPKG…KPQGKKTKFE (71 aa). Lys-646 is modified (N6-acetyllysine). Positions 650–696 are enriched in gly residues; that stretch reads EGGFGGRGGGRGGFGGRGGGRGGRGGFGGRGRGGFGGRGGFRGGRGG. Residues Arg-656, Arg-660, Arg-666, Arg-670, Arg-673, Arg-679, Arg-681, Arg-687, and Arg-691 each carry the asymmetric dimethylarginine modification. Arg-694 bears the Asymmetric dimethylarginine; alternate mark. An Omega-N-methylarginine; alternate modification is found at Arg-694. Residues 697-710 show a composition bias toward basic and acidic residues; that stretch reads GGDHKPQGKKTKFE.

As to quaternary structure, identified in a IGF2BP1-dependent mRNP granule complex containing untranslated mRNAs. Component of the SWAP complex that consists of NPM1, NCL/nucleolin, PARP1 and SWAP70. Component of a complex which is at least composed of HTATSF1/Tat-SF1, the P-TEFb complex components CDK9 and CCNT1, RNA polymerase II, SUPT5H, and NCL/nucleolin. Interacts with AICDA. Interacts with APTX. Interacts with C1QBP. Interacts with ERBB4. Interacts (via C-terminus) with FMR1 isoform 6 (via N-terminus). Interacts with GZF1; this interaction is important for nucleolar localization of GZF1. Interacts with NSUN2. Interacts with NVL. Interacts (via N-terminus domain) with SETX. Interacts (via RRM1 and C-terminal RRM4/Arg/Gly-rich domains) with TERT; the interaction is important for nucleolar localization of TERT. Interacts with WDR46. Interacts with ZFP36. Interacts with LRRC34. Interacts with RRP1B. Interacts with HNRNPU; this interaction occurs during mitosis. Interacts with RIOK1; RIOK1 recruits NCL to PRMT5 for symmetrically methylation. Interacts with ZBTB7B. Interacts with MDK; this interaction promotes NCL clustering and lateral movements of this complex into lipid rafts leading to MDK internalization. Interacts with HDGF (isoform 1). Interacts with ALKBH2. Interacts with IGFBP5; this interaction is necessary for IGFBP5 localization to the nucleus. Interacts with DDX24 (when ubiquitinated); this interaction may be important during ribosome biogenesis. Some glutamate residues are glycylated by TTLL8. This modification occurs exclusively on glutamate residues and results in a glycine chain on the gamma-carboxyl group. Post-translationally, symmetrically methylated by PRMT5.

The protein localises to the nucleus. It is found in the nucleolus. It localises to the cytoplasm. Nucleolin is the major nucleolar protein of growing eukaryotic cells. It is found associated with intranucleolar chromatin and pre-ribosomal particles. It induces chromatin decondensation by binding to histone H1. It is thought to play a role in pre-rRNA transcription and ribosome assembly. May play a role in the process of transcriptional elongation. Binds RNA oligonucleotides with 5'-UUAGGG-3' repeats more tightly than the telomeric single-stranded DNA 5'-TTAGGG-3' repeats. The sequence is that of Nucleolin (NCL) from Homo sapiens (Human).